The sequence spans 549 residues: S-methyl thiourocanate hydratase (549 aa).

Residues methionine 49, glycine 173, methionine 174, glycine 175, aspartate 193, serine 198, asparagine 239, alanine 240, glutamine 260, valine 270, and tyrosine 318 each contribute to the NAD(+) site.

The protein belongs to the urocanase family. S-methyl thiourocanate hydratase subfamily. Requires NAD(+) as cofactor.

It carries out the reaction S-methyl-(E)-thiourocanate + H2O = S-methyl-thiohydantoin-5-propanoate. Functionally, hydratase involved in the catabolism of S-methyl ergothioneine. Catalyzes the 1,4-addition of H(2)O to S-methyl thiourocanate, leading to the formation of S-methyl-thiohydantoin-5-propanoate, the second step in S-methyl ergothioneine degradation. Cannot use urocanate or thiourocanate as substrate. The polypeptide is S-methyl thiourocanate hydratase (Variovorax sp. (strain JCM 16519 / RA8)).